The primary structure comprises 180 residues: Oligoribonuclease (180 aa).

Positions 7–170 constitute an Exonuclease domain; the sequence is LIWIDLEMTG…DDIRESIAEL (164 aa). Residue Y128 is part of the active site.

This sequence belongs to the oligoribonuclease family.

It is found in the cytoplasm. Functionally, 3'-to-5' exoribonuclease specific for small oligoribonucleotides. The protein is Oligoribonuclease of Pseudomonas putida (strain ATCC 700007 / DSM 6899 / JCM 31910 / BCRC 17059 / LMG 24140 / F1).